The sequence spans 675 residues: UvrABC system protein B (675 aa).

A Helicase ATP-binding domain is found at 30–417; the sequence is SGIEQGNRNQ…SDQIVEQVVR (388 aa). An ATP-binding site is contributed by 43–50; it reads GVTGSGKT. Positions 96-119 match the Beta-hairpin motif; that stretch reads YYDYYQPEAYVPSSDTFIEKDAAI. Positions 434–601 constitute a Helicase C-terminal domain; the sequence is QVDDVLSEIN…AVRQKVKEID (168 aa). A UVR domain is found at 637–672; that stretch reads AKHMSKLEKEMLKASKELQFEQAARLRDEILRLKAQ.

It belongs to the UvrB family. As to quaternary structure, forms a heterotetramer with UvrA during the search for lesions. Interacts with UvrC in an incision complex.

The protein localises to the cytoplasm. Its function is as follows. The UvrABC repair system catalyzes the recognition and processing of DNA lesions. A damage recognition complex composed of 2 UvrA and 2 UvrB subunits scans DNA for abnormalities. Upon binding of the UvrA(2)B(2) complex to a putative damaged site, the DNA wraps around one UvrB monomer. DNA wrap is dependent on ATP binding by UvrB and probably causes local melting of the DNA helix, facilitating insertion of UvrB beta-hairpin between the DNA strands. Then UvrB probes one DNA strand for the presence of a lesion. If a lesion is found the UvrA subunits dissociate and the UvrB-DNA preincision complex is formed. This complex is subsequently bound by UvrC and the second UvrB is released. If no lesion is found, the DNA wraps around the other UvrB subunit that will check the other stand for damage. This is UvrABC system protein B from Acinetobacter baylyi (strain ATCC 33305 / BD413 / ADP1).